Here is a 272-residue protein sequence, read N- to C-terminus: Putative hydro-lyase AZC_4080 (272 aa).

It belongs to the D-glutamate cyclase family.

The sequence is that of Putative hydro-lyase AZC_4080 from Azorhizobium caulinodans (strain ATCC 43989 / DSM 5975 / JCM 20966 / LMG 6465 / NBRC 14845 / NCIMB 13405 / ORS 571).